We begin with the raw amino-acid sequence, 1036 residues long: MPKTIKKQNPSNTTLQYKKYLEQSKEKTAKAKNKDVSIDDLLKKPFLEEIKTNVLKKNKTTRASTATRGTSKVKKQIVESSIDFFDEKKRGVFIVPPAGTSVINDDRDDNKAVEETVSKTAISQNQLAHYANSELVETEQFELKPVALEHNQVLTSTRHSQERESIFEKAQLFWQIFVGDVRFGFWKNHTWIWLGFFDQHQNWYYFEVVETVELPQEHTAFIKRKQIDSCFWKPLVGNPNYGYIQNNIWVWKGFFDTKLNWIPDPVRFTLPMVEKATTTTPVVQIELPAPPTVTVVDQTSPPTAAVTVSTSQPVIEEQTTVFNQTTQLEQLSVSAPLLDQSEVETEMVEVPFVAPSTTTTQPQVVTVQAQPASSSIQFQEPIIKVEFVNESFDFKKPSQTAAAASQAPSQAINIALNEADLIDELVAVGTTATTALPQSELIQEVVVIDNGQPQQAGFHYVVDFLTSTAPLTVAEIELQEQELVNEFVTTTSRETTTFASTPVFEPVVIPTVESEEQLLENEFVESTVVSATSNEPNVASTPVVETVELTETPVSLEPLETVQLETAPVVTETVTVTEKAVEPEVLAVVEEAPLAVEPIVETSTTLAAETVEEAQVEQESTAVAVEPAIETESKATSEAQAELDWEALIGNSEYGYFDAEQNWIWTGYFDEDNKWVSTATAQTEANAEEVVLTADAETSELNTESDPSFEPEVEIQPEPEPNFDLETIPEPESIETTEPEPNFEPEVELEPEIEPNFESETEVQQELAQESSFESEPEPNFETEVEVQPESEIESKFEAEVQSEPKVSLNSDFETKPEAQAEVTPETLEVEATSEAPELQPETEATKVVDDVEEEQLDWELLIGNSNYGHYEPSGEWVWAGYFDDNQIWTPDASVEWARESDYTDLIGDEIYGRYNRKGEWIWYGYYDETGEWVLVDEHYQNHQPRISEAPRFWEQLIGNEDYGYYEDNEWKWYDGEFDSEGNWLVFHSSNAEDAKNIDIAKDIPVFESFDVDSIDADEWLDQFSDSDAKEVFGED.

Positions 697–727 (ETSELNTESDPSFEPEVEIQPEPEPNFDLET) are disordered. Over residues 707 to 727 (PSFEPEVEIQPEPEPNFDLET) the composition is skewed to acidic residues. A run of 3 repeats spans residues 718–723 (EPEPNF), 738–743 (EPEPNF), and 776–781 (EPEPNF). Residues 718–781 (EPEPNFDLET…SFESEPEPNF (64 aa)) are 3 X 6 AA repeats of E-P-E-P-N-F. Disordered stretches follow at residues 757–784 (FESE…FETE) and 798–845 (EAEV…ETEA). Acidic residues predominate over residues 773–784 (FESEPEPNFETE).

The protein localises to the cell projection. It localises to the attachment organelle. Protein cytoskeleton-associated which plays a role in gliding motility and perhaps also in mucociliary clearance. This chain is Protein P200 (p200), found in Mycoplasma pneumoniae (strain ATCC 29342 / M129 / Subtype 1) (Mycoplasmoides pneumoniae).